The following is a 613-amino-acid chain: Dihydroxy-acid dehydratase (613 aa).

D81 is a Mg(2+) binding site. A [2Fe-2S] cluster-binding site is contributed by C122. Mg(2+) contacts are provided by D123 and K124. K124 is subject to N6-carboxylysine. A [2Fe-2S] cluster-binding site is contributed by C193. E489 serves as a coordination point for Mg(2+). S515 (proton acceptor) is an active-site residue.

This sequence belongs to the IlvD/Edd family. Homodimer. [2Fe-2S] cluster is required as a cofactor. Requires Mg(2+) as cofactor.

The enzyme catalyses (2R)-2,3-dihydroxy-3-methylbutanoate = 3-methyl-2-oxobutanoate + H2O. It catalyses the reaction (2R,3R)-2,3-dihydroxy-3-methylpentanoate = (S)-3-methyl-2-oxopentanoate + H2O. Its pathway is amino-acid biosynthesis; L-isoleucine biosynthesis; L-isoleucine from 2-oxobutanoate: step 3/4. It functions in the pathway amino-acid biosynthesis; L-valine biosynthesis; L-valine from pyruvate: step 3/4. Functionally, functions in the biosynthesis of branched-chain amino acids. Catalyzes the dehydration of (2R,3R)-2,3-dihydroxy-3-methylpentanoate (2,3-dihydroxy-3-methylvalerate) into 2-oxo-3-methylpentanoate (2-oxo-3-methylvalerate) and of (2R)-2,3-dihydroxy-3-methylbutanoate (2,3-dihydroxyisovalerate) into 2-oxo-3-methylbutanoate (2-oxoisovalerate), the penultimate precursor to L-isoleucine and L-valine, respectively. In Pseudomonas putida (strain W619), this protein is Dihydroxy-acid dehydratase.